The sequence spans 264 residues: Short chain dehydrogenase/reductase nsrJ (264 aa).

Residues Ile-24, Asp-70, Asn-97, and Arg-130 each coordinate NADP(+). Catalysis depends on proton donor residues Ser-146 and Ser-147. Positions 161, 165, and 196 each coordinate NADP(+). The Proton acceptor role is filled by Tyr-161. Lys-165 serves as the catalytic Lowers pKa of active site Tyr.

The protein belongs to the short-chain dehydrogenases/reductases (SDR) family.

It participates in secondary metabolite biosynthesis. Its function is as follows. Short chain dehydrogenase/reductase; part of the gene cluster that mediates the biosynthesis of the tetrahydroxanthone dimer neosartorin, which exhibits antibacterial activity. The two different monomeric units appear to be synthesized by the same set of enzymes, among which the Baeyer-Villiger monooxygenase nsrF is the key enzyme for the divergence of the biosynthetic routes. The pathway begins with the synthesis of atrochrysone thioester by the polyketide synthase nsrB. The atrochrysone carboxyl ACP thioesterase nsrC then breaks the thioester bond and releases the atrochrysone carboxylic acid from AacuL. Atrochrysone carboxylic acid is decarboxylated by the decarboxylase nsrE, and oxidized by the anthrone oxygenase nsrD to yield emodin. Emodin is then reduced to emodin hydroquinone by the oxidoreductase nsrR. A-ring reduction by the short chain dehydrogenase nsrJ, dehydration by the scytalone dehydratase-like protein nsrI and probable spontaneous re-oxidation, results in overall deoxygenation to chrysophanol. The Baeyer-Villiger monooxygenase nsrF accepts chrysophanol as a substrate to insert one oxygen atom at two different positions to yield the precursors of both monomric units. NsrF is promiscuous/flexible in interacting with the 2 (non methylated and methylated) aromatic rings of chrysophanol, thus diverging the biosynthetic pathway at this point. After the hydrolysis of the lactones, methylesterification by the methyltransferase nsrG yields respectively moniliphenone and 2,2',6'-trihydroxy-4-methyl-6-methoxya-cyldiphenylmethanone. The next steps are the hydroxylation by the FAD-dependent monooxygenase nsrK, followed by isomerization by the monooxygenase nsrQ. The short chain dehydrogenase/reductase nsrO then catalyzes the C-5 ketoreduction to give the xanthone skeleton of blennolide C and 5-acetylblennolide A. The acetyltransferase nsrL has a strict substrate specificity and uses only blennolide A but not blennolide C to yield 5-acetylblennolide A as the single-acetylated product. In the final step of the biosynthesis, the heterodimerization of the 2 xanthones, blennolide C and 5-acetylblennolide A, is catalyzed by the cytochrome P450 monooxygenase nsrP. NsrP can utilize at least three different xanthones as its substrates to perform the dimerization reaction. This chain is Short chain dehydrogenase/reductase nsrJ, found in Aspergillus novofumigatus (strain IBT 16806).